A 239-amino-acid polypeptide reads, in one-letter code: Increased recombination centers protein 22-1 (239 aa).

Residues 1 to 19 (MKLSTIFTAFAATIATVAG) form the signal peptide. At 20 to 161 (YETTGSKQTV…AAVSFFDPRL (142 aa)) the chain is on the lumenal side. The chain crosses the membrane as a helical span at residues 162–182 (IFLELVLLITFAGLIYVGYEI). At 183–239 (WGKQYFKGVAPVKAKKVSAAKASSPVASGPSTTSATGYDTNWIPESHLKQKKTKKVN) the chain is on the cytoplasmic side. Positions 201–213 (AAKASSPVASGPS) are enriched in low complexity. Residues 201 to 222 (AAKASSPVASGPSTTSATGYDT) are disordered.

It belongs to the IRC22 family.

The protein localises to the endoplasmic reticulum membrane. Is probably involved in a pathway contributing to genomic integrity. The chain is Increased recombination centers protein 22-1 (IRC22-1) from Candida albicans (strain SC5314 / ATCC MYA-2876) (Yeast).